We begin with the raw amino-acid sequence, 584 residues long: Insulin-like growth factor 2 mRNA-binding protein 3 (584 aa).

RRM domains lie at 2 to 75 and 81 to 156; these read NKLY…HSVP and RKLQ…YIPD. Residues 160–199 are disordered; it reads AQQPPQQHPQGRRGFGQRGPPRQGSPSATTRQKPQSDVPL. Polar residues predominate over residues 184 to 194; sequence SPSATTRQKPQ. 4 KH domains span residues 196–261, 277–344, 409–474, and 491–557; these read DVPL…CKII, EIPL…EEEI, SETV…QGRI, and KLEA…QRKI.

It belongs to the RRM IMP/VICKZ family. In terms of assembly, homodimer and multimer.

The protein localises to the cytoplasm. The protein resides in the nucleus. Its subcellular location is the P-body. It localises to the stress granule. In terms of biological role, RNA-binding factor that may recruit target transcripts to cytoplasmic protein-RNA complexes (mRNPs). This transcript 'caging' into mRNPs allows mRNA transport and transient storage. It also modulates the rate and location at which target transcripts encounter the translational apparatus and shields them from endonuclease attacks or microRNA-mediated degradation. Preferentially binds to N6-methyladenosine (m6A)-containing mRNAs and increases their stability. The sequence is that of Insulin-like growth factor 2 mRNA-binding protein 3 (IGF2BP3) from Gallus gallus (Chicken).